The chain runs to 291 residues: Phosphatidylglycerol--prolipoprotein diacylglyceryl transferase (291 aa).

The next 4 helical transmembrane spans lie at 24–44 (WYAL…RALL), 64–84 (FILW…VLFY), 100–120 (WNGG…VILF), and 125–145 (GLPI…GLFL). R147 lines the a 1,2-diacyl-sn-glycero-3-phospho-(1'-sn-glycerol) pocket. A run of 3 helical transmembrane segments spans residues 187 to 207 (AALE…LGAL), 211 to 231 (GLVL…AEFF), and 247 to 267 (MGML…YAAW).

This sequence belongs to the Lgt family.

The protein resides in the cell inner membrane. It catalyses the reaction L-cysteinyl-[prolipoprotein] + a 1,2-diacyl-sn-glycero-3-phospho-(1'-sn-glycerol) = an S-1,2-diacyl-sn-glyceryl-L-cysteinyl-[prolipoprotein] + sn-glycerol 1-phosphate + H(+). Its pathway is protein modification; lipoprotein biosynthesis (diacylglyceryl transfer). Catalyzes the transfer of the diacylglyceryl group from phosphatidylglycerol to the sulfhydryl group of the N-terminal cysteine of a prolipoprotein, the first step in the formation of mature lipoproteins. This is Phosphatidylglycerol--prolipoprotein diacylglyceryl transferase from Nitrobacter winogradskyi (strain ATCC 25391 / DSM 10237 / CIP 104748 / NCIMB 11846 / Nb-255).